A 152-amino-acid polypeptide reads, in one-letter code: Protein Smg homolog (152 aa).

The protein belongs to the Smg family.

In Bordetella bronchiseptica (strain ATCC BAA-588 / NCTC 13252 / RB50) (Alcaligenes bronchisepticus), this protein is Protein Smg homolog.